The sequence spans 105 residues: Large ribosomal subunit protein uL18c (105 aa).

This sequence belongs to the universal ribosomal protein uL18 family. As to quaternary structure, part of the 50S ribosomal subunit; contacts the 5S rRNA.

It localises to the plastid. It is found in the chloroplast. Binds 5S rRNA, forms part of the central protuberance of the 50S subunit. This is Large ribosomal subunit protein uL18c (rpl18) from Gracilaria tenuistipitata var. liui (Red alga).